The chain runs to 130 residues: Small ribosomal subunit protein uS8 (130 aa).

It belongs to the universal ribosomal protein uS8 family. As to quaternary structure, part of the 30S ribosomal subunit.

In terms of biological role, one of the primary rRNA binding proteins, it binds directly to 16S rRNA central domain where it helps coordinate assembly of the platform of the 30S subunit. The chain is Small ribosomal subunit protein uS8 from Methanocorpusculum labreanum (strain ATCC 43576 / DSM 4855 / Z).